A 320-amino-acid polypeptide reads, in one-letter code: Ferrochelatase (320 aa).

Fe cation is bound by residues His194 and Glu275.

Belongs to the ferrochelatase family.

The protein localises to the cytoplasm. It catalyses the reaction heme b + 2 H(+) = protoporphyrin IX + Fe(2+). The protein operates within porphyrin-containing compound metabolism; protoheme biosynthesis; protoheme from protoporphyrin-IX: step 1/1. In terms of biological role, catalyzes the ferrous insertion into protoporphyrin IX. The sequence is that of Ferrochelatase from Stenotrophomonas maltophilia (strain R551-3).